We begin with the raw amino-acid sequence, 293 residues long: Elongation factor Ts (293 aa).

Positions 80–83 are involved in Mg(2+) ion dislocation from EF-Tu; it reads TDFV.

The protein belongs to the EF-Ts family.

It localises to the cytoplasm. In terms of biological role, associates with the EF-Tu.GDP complex and induces the exchange of GDP to GTP. It remains bound to the aminoacyl-tRNA.EF-Tu.GTP complex up to the GTP hydrolysis stage on the ribosome. The sequence is that of Elongation factor Ts from Staphylococcus aureus (strain USA300).